The chain runs to 346 residues: MQSSQLLPLGSLLLSFATPLAQADALHDQASALFKPIPEQVTELRGQPISEQQRELGKKLFFDPRLSRSHVLSCNTCHNVGTGGADNVPTSVGHGWQKGPRNSPTVFNAVFNAAQFWDGRAKDLGEQAKGPIQNSVEMHSTPQLVEQTLGSIPEYVDAFRKAFPKAGKPVSFDNMALAIEAYEATLVTPDSPFDLYLKGDDKALDAQQKKGLKAFMDSGCSACHNGINLGGQAYFPFGLVKKPDASVLPSGDKGRFAVTKTQSDEYVFRAAPLRNVALTAPYFHSGQVWELKDAVAIMGNAQLGKQLAPDDVENIVAFLHSLSGKQPRVEYPLLPASTETTPRPAE.

Positions methionine 1–alanine 23 are cleaved as a signal peptide. Residues cysteine 74, cysteine 77, histidine 78, cysteine 220, cysteine 223, histidine 224, histidine 284, and methionine 298 each coordinate heme c.

Heme c serves as cofactor. In terms of processing, binds 2 heme groups per subunit. Sequencing of the whole protein indicates about 20% starts on Val-247.

It is found in the periplasm. It catalyses the reaction 2 Fe(II)-[cytochrome c] + H2O2 + 2 H(+) = 2 Fe(III)-[cytochrome c] + 2 H2O. Its function is as follows. Catalyzes the peroxidative oxidation of azurin and cytochrome c551. Likely to provide protection against toxic peroxides. The polypeptide is Cytochrome c551 peroxidase (ccpA) (Pseudomonas aeruginosa (strain ATCC 15692 / DSM 22644 / CIP 104116 / JCM 14847 / LMG 12228 / 1C / PRS 101 / PAO1)).